Consider the following 253-residue polypeptide: Cyclin-C1-1 (253 aa).

The protein belongs to the cyclin family. Cyclin C subfamily.

This Arabidopsis thaliana (Mouse-ear cress) protein is Cyclin-C1-1 (CYCC1-1).